Reading from the N-terminus, the 323-residue chain is Transposase for insertion sequence element IS6120 (323 aa).

Positions 300–323 are disordered; the sequence is ERPTDITPPTSPSDGGQHAGTEVA. A compositionally biased stretch (low complexity) spans 304-313; the sequence is DITPPTSPSD.

This sequence belongs to the transposase mutator family.

Its function is as follows. Required for the transposition of the insertion element. The protein is Transposase for insertion sequence element IS6120 of Mycolicibacterium smegmatis (Mycobacterium smegmatis).